We begin with the raw amino-acid sequence, 972 residues long: mRNA transport regulator MTR10 (972 aa).

It is found in the nucleus. Involved in mRNA transport from nucleus to cytoplasm. The protein is mRNA transport regulator MTR10 (MTR10) of Saccharomyces cerevisiae (strain ATCC 204508 / S288c) (Baker's yeast).